The primary structure comprises 250 residues: Superoxide dismutase 1 copper chaperone (250 aa).

The 64-residue stretch at 4 to 67 (SFEIVFAVPM…AIQSTGKDAI (64 aa)) folds into the HMA domain. Positions 15, 18, 229, and 231 each coordinate Cu cation.

Belongs to the CCS1 family. The cofactor is Cu(2+).

Its subcellular location is the cytoplasm. Functionally, copper chaperone for superoxide dismutase 1 (SOD1). Binds copper ions and delivers them specifically to SOD1. The protein is Superoxide dismutase 1 copper chaperone (CCS1) of Debaryomyces hansenii (strain ATCC 36239 / CBS 767 / BCRC 21394 / JCM 1990 / NBRC 0083 / IGC 2968) (Yeast).